The chain runs to 487 residues: GTPase Der (487 aa).

EngA-type G domains lie at 3–166 and 193–366; these read PVIA…PRDA and IKIA…KSAV. GTP is bound by residues 9-16, 56-60, 118-121, 199-206, 246-250, and 311-314; these read GRPNVGKS, DTGGI, NKID, DTAGV, and NKWD. The KH-like domain occupies 367 to 451; that stretch reads TRWPTSRLTQ…PIRIEYKGGE (85 aa). Over residues 449 to 461 the composition is skewed to basic and acidic residues; that stretch reads GGENPFEGKKNTL. Residues 449 to 487 form a disordered region; the sequence is GGENPFEGKKNTLTDRQVNKKRRLMSHHKKAEKKRRDKR. The span at 467 to 487 shows a compositional bias: basic residues; sequence NKKRRLMSHHKKAEKKRRDKR.

This sequence belongs to the TRAFAC class TrmE-Era-EngA-EngB-Septin-like GTPase superfamily. EngA (Der) GTPase family. As to quaternary structure, associates with the 50S ribosomal subunit.

Its function is as follows. GTPase that plays an essential role in the late steps of ribosome biogenesis. This is GTPase Der from Pseudomonas putida (strain GB-1).